The following is a 137-amino-acid chain: Large ribosomal subunit protein uL16 (137 aa).

It belongs to the universal ribosomal protein uL16 family. In terms of assembly, part of the 50S ribosomal subunit.

In terms of biological role, binds 23S rRNA and is also seen to make contacts with the A and possibly P site tRNAs. The chain is Large ribosomal subunit protein uL16 from Afipia carboxidovorans (strain ATCC 49405 / DSM 1227 / KCTC 32145 / OM5) (Oligotropha carboxidovorans).